We begin with the raw amino-acid sequence, 243 residues long: UPF0246 protein SpyM3_1790 (243 aa).

It belongs to the UPF0246 family.

The protein is UPF0246 protein SpyM3_1790 of Streptococcus pyogenes serotype M3 (strain ATCC BAA-595 / MGAS315).